Reading from the N-terminus, the 200-residue chain is 3-isopropylmalate dehydratase small subunit (200 aa).

The protein belongs to the LeuD family. LeuD type 1 subfamily. Heterodimer of LeuC and LeuD.

It catalyses the reaction (2R,3S)-3-isopropylmalate = (2S)-2-isopropylmalate. Its pathway is amino-acid biosynthesis; L-leucine biosynthesis; L-leucine from 3-methyl-2-oxobutanoate: step 2/4. Functionally, catalyzes the isomerization between 2-isopropylmalate and 3-isopropylmalate, via the formation of 2-isopropylmaleate. The sequence is that of 3-isopropylmalate dehydratase small subunit from Erythrobacter litoralis (strain HTCC2594).